A 310-amino-acid polypeptide reads, in one-letter code: Basic salivary proline-rich protein 4 (310 aa).

The signal sequence occupies residues 1-16 (MLLILLSVALLALSSA). The interval 14–310 (SSAESSSEDV…RPAQGQQPPQ (297 aa)) is disordered. Repeat copies occupy residues 35–55 (KPEGRRPQGGNQPQRPPPPPG), 56–76 (KPQGPPPQGGNQSQGPPPPPG), 77–97 (KPEGRPPQGGNQSQGPPPHPG), 98–118 (KPERPPPQGGNQSQGPPPHPG), 119–139 (KPESRPPQGGHQSQGPPPTPG), 140–160 (KPEGPPPQGGNQSQGTPPPPG), 161–181 (KPEGRPPQGGNQSQGPPPHPG), 182–202 (KPERPPPQGGNQSHRPPPPPG), and 203–223 (KPERPPPQGGNQSQGPPPHPG). A 9.5 X 21 AA tandem repeats of K-P-[EQ]-[GR]-[PR]-[PR]-P-Q-G-G-N-Q-[PS]-[QH]-[RG]-[PT]-P-P-[PH]-P-G region spans residues 35–234 (KPEGRRPQGG…PEGPPPQEGN (200 aa)). The segment covering 48–63 (QRPPPPPGKPQGPPPQ) has biased composition (pro residues). N-linked (GlcNAc...) asparagine glycans are attached at residues Asn-66, Asn-87, and Asn-108. Pro residues predominate over residues 133–147 (GPPPTPGKPEGPPPQ). Asn-150, Asn-171, and Asn-192 each carry an N-linked (GlcNAc...) asparagine glycan. Pro residues predominate over residues 196-210 (RPPPPPGKPERPPPQ). Asn-213 is a glycosylation site (N-linked (GlcNAc...) asparagine). A compositionally biased stretch (pro residues) spans 217–231 (GPPPHPGKPEGPPPQ). A 10; truncated repeat occupies 224 to 234 (KPEGPPPQEGN). Asn-234 carries N-linked (GlcNAc...) asparagine glycosylation. The span at 258–310 (QGPPPPGKPQGPPPAGGNPQQPQAPPAGKPQGPPPPPQGGRPPRPAQGQQPPQ) shows a compositional bias: pro residues.

In terms of processing, N-glycosylated. Post-translationally, proteolytically cleaved at the tripeptide Xaa-Pro-Gln, where Xaa in the P(3) position is mostly lysine. The endoprotease may be of microbial origin. Pyroglutamate formation found on at least Gln-46, Gln-48, Gln-67, Gln-88; Gln-90; Gln-193; Gln-288 Gln-214 and Gln-295, preferentially in diabetic, and head and neck cancer patients.

It localises to the secreted. The polypeptide is Basic salivary proline-rich protein 4 (PRB4) (Homo sapiens (Human)).